The sequence spans 272 residues: Glutamate racemase (272 aa).

Substrate contacts are provided by residues 13–14 and 45–46; these read DS and YG. Cysteine 76 (proton donor/acceptor) is an active-site residue. 77–78 contributes to the substrate binding site; the sequence is NT. Cysteine 187 acts as the Proton donor/acceptor in catalysis. 188–189 provides a ligand contact to substrate; it reads TH.

Belongs to the aspartate/glutamate racemases family.

It catalyses the reaction L-glutamate = D-glutamate. The protein operates within cell wall biogenesis; peptidoglycan biosynthesis. Provides the (R)-glutamate required for cell wall biosynthesis. The sequence is that of Glutamate racemase from Roseiflexus sp. (strain RS-1).